The primary structure comprises 350 residues: Biotin synthase (350 aa).

Residues 41-268 form the Radical SAM core domain; that stretch reads NEVQISRLLS…KSRVRLSAGR (228 aa). 3 residues coordinate [4Fe-4S] cluster: Cys56, Cys60, and Cys63. Residues Cys100, Cys131, Cys191, and Arg263 each coordinate [2Fe-2S] cluster.

The protein belongs to the radical SAM superfamily. Biotin synthase family. Homodimer. The cofactor is [4Fe-4S] cluster. [2Fe-2S] cluster is required as a cofactor.

The enzyme catalyses (4R,5S)-dethiobiotin + (sulfur carrier)-SH + 2 reduced [2Fe-2S]-[ferredoxin] + 2 S-adenosyl-L-methionine = (sulfur carrier)-H + biotin + 2 5'-deoxyadenosine + 2 L-methionine + 2 oxidized [2Fe-2S]-[ferredoxin]. It functions in the pathway cofactor biosynthesis; biotin biosynthesis; biotin from 7,8-diaminononanoate: step 2/2. Functionally, catalyzes the conversion of dethiobiotin (DTB) to biotin by the insertion of a sulfur atom into dethiobiotin via a radical-based mechanism. In Shewanella halifaxensis (strain HAW-EB4), this protein is Biotin synthase.